Here is a 159-residue protein sequence, read N- to C-terminus: Sulfur carrier protein DsrE2 (159 aa).

2 helical membrane passes run 21-43 (PFILASTAAALGYEVQVFFTFYG) and 72-91 (WFPVLGLALPGMQGMMTAMM).

The protein localises to the cell membrane. The protein operates within energy metabolism; sulfur metabolism. Its function is as follows. Sulfur carrier protein probably involved in sulfur trafficking for oxidative dissimilatory sulfur metabolism. May be a component of a cytoplasmic sulfur relay system delivering sulfur to DsrC. Binds sulfur in the presence of sulfide in vitro. The sequence is that of Sulfur carrier protein DsrE2 from Allochromatium vinosum (strain ATCC 17899 / DSM 180 / NBRC 103801 / NCIMB 10441 / D) (Chromatium vinosum).